The sequence spans 1704 residues: MYAKATDVARVYAAADVAYANVLQQRAVKLDFAPPLKALETLHRLYYPLRFKGGTLPPTQHPILAGHQRVAEEVLHNFARGRSTVLEIGPSLHSALKLHGAPNAPVADYHGCTKYGTRDGSRHITALESRSVATGRPEFKADASLLANGIASRTFCVDGVGSCAFKSRVGIANHSLYDVTLEELANAFENHGLHMVRAFMHMPEELLYMDNVVNAELGYRFHVIEEPMAVKDCAFQGGDLRLHFPELDFINESQERRIERLAARGSYSRRAVIFSGDDDWGDAYLHDFHTWLAYLLVRNYPTPFGFSLHIEVQRRHGSSIELRITRAPPGDRMLAVVPRTSQGLCRIPNIFYYADASGTEHKTILTSQHKVNMLLNFMQTRPEKELVDMTVLMSFARARLRAIVVASEVTESSWNISPADLVRTVVSLYVLHIIERRRAAVAVKTAKDDVFGETSFWESLKHVLGSCCGLRNLKGTDVVFTKRVVDKYRVHSLGDIICDVRLSPEQVGFLPSRVPPARVFHDREELEVLREAGCYNERPVPSTPPVEEPQGFDADLWHATAASLPEYRATLQAGLNTDVKQLKITLENALKTIDGLTLSPVRGLEMYEGPPGSGKTGTLIAALEAAGGKALYVAPTRELREAMDRRIKPPSASRTQHVALAILRRATAEGAPFATVVIDECFMFPLVYVAIVHALSPSSRIVLVGDVHQIGFIDFQGTSANMPLVRDVVKQCRRRTFNQTKRCPADVVATTFFQSLYPGCTTTSGCVASISHVAPDYRNSQAQTLCFTQEEKSRHGAEGAMTVHEAQGRTFASVILHYNGSTAEQKLLAEKSHLLVGITRHTNHLYIRDPTGDIERQLNHSAKAEVFTDIPAPLEITTVKPSEEVQRNEVMATIPPQSPTPHGAIHLLRKNFGDQPDCGCVALAKTGYEVFGGRAKINVELAEPDATPKPHRAFQEGVQWVKVTNASNKHQALQTLLSRYTKRSADLPLHEAKEDVKRMLNSLDRHWDWTVTEDARDRAVFETQLKFTQRGGTVEDLLEPDDPYIRDIDFLMKTQQKVSPKPINTGKVGQGIAAHSKSLNFVLAAWIRILEEILRTGSRTVRYSNGLPDEEEAMLLEAKINQVPHATFVSADWTEFDTAHNNTSELLFAALLERIGTPAAAVNLFRERCGKRTLRAKGLGSVEVDGLLDSGAAWTPCRNTIFSAAVMLTLFRGVKFAAFKGDDSLLCGSHYLRFDASRLHMGERYKTKHLKVEVQKIVPYIGLLVSAEQVVLDPVRSALKIFGRCYTSELLYSKYVEAVRDITKGWSDARYHSLLCHMSACYYNYAPESAAYIIDAVVRFGRGDFPFEQLRVVRAHVQAPDAYSSTYPANVRASCLDHVFEPRQAAAPAGFVATCAKPETPSSLTAKAGVSATTSHVATGTAPPESPWDAPAANSFSELLTPETPSTSSSAVIVFIGLLYIVWKVAQWWRHRKRTEDLNSRKPPSQDRQSRSSECLDRSGERTGSSLTAPTAPSPSFSFSERARLATGPTVAAATSPSATPSCATDQVAARTTPDFAPFLGSQSARAVSKPYRPPTTARWKEVTPLHAWKGVTGDRPEVREDPETAAVVQALISGRYPQKTKLSSDASKGYSRTKGCSQSTSFPAPSADYQARDCQTVRVCRAAAEMARSCIHEPLASSAASADLKRIRSTSDSVPDVKISKSA.

Residues 52–295 (KGGTLPPTQH…HDFHTWLAYL (244 aa)) enclose the Alphavirus-like MT domain. The 163-residue stretch at 575–737 (LNTDVKQLKI…VVKQCRRRTF (163 aa)) folds into the (+)RNA virus helicase ATP-binding domain. The (+)RNA virus helicase C-terminal domain occupies 738-880 (NQTKRCPADV…PAPLEITTVK (143 aa)). A compositionally biased stretch (basic and acidic residues) spans 1475–1501 (TEDLNSRKPPSQDRQSRSSECLDRSGE). Disordered regions lie at residues 1475-1518 (TEDL…PSFS), 1621-1649 (TKLSSDASKGYSRTKGCSQSTSFPAPSAD), and 1678-1704 (SSAASADLKRIRSTSDSVPDVKISKSA). The span at 1505 to 1518 (SSLTAPTAPSPSFS) shows a compositional bias: low complexity. A compositionally biased stretch (polar residues) spans 1635 to 1644 (KGCSQSTSFP).

The protein belongs to the ssRNA positive-strand viruses RNA-directed RNA polymerase family.

It is found in the host cytoplasm. The catalysed reaction is RNA(n) + a ribonucleoside 5'-triphosphate = RNA(n+1) + diphosphate. The enzyme catalyses ATP + H2O = ADP + phosphate + H(+). Its function is as follows. RNA-dependent RNA polymerase replicates the viral genome composed of 2 RNA segments, RNA1 and RNA2. The protein is Methyltransferase/helicase/RNA-directed RNA polymerase of Helicoverpa armigera (Cotton bollworm).